We begin with the raw amino-acid sequence, 382 residues long: ATP phosphoribosyltransferase regulatory subunit (382 aa).

The protein belongs to the class-II aminoacyl-tRNA synthetase family. HisZ subfamily. Heteromultimer composed of HisG and HisZ subunits.

The protein localises to the cytoplasm. Its pathway is amino-acid biosynthesis; L-histidine biosynthesis; L-histidine from 5-phospho-alpha-D-ribose 1-diphosphate: step 1/9. In terms of biological role, required for the first step of histidine biosynthesis. May allow the feedback regulation of ATP phosphoribosyltransferase activity by histidine. In Burkholderia pseudomallei (strain K96243), this protein is ATP phosphoribosyltransferase regulatory subunit.